A 108-amino-acid polypeptide reads, in one-letter code: Tetrahydromethanopterin S-methyltransferase subunit B (108 aa).

Residues 79 to 99 (GMFFGFWVTMAILVLVTILAV) form a helical membrane-spanning segment.

This sequence belongs to the MtrB family. As to quaternary structure, the complex is composed of 8 subunits; MtrA, MtrB, MtrC, MtrD, MtrE, MtrF, MtrG and MtrH.

The protein resides in the cell membrane. It carries out the reaction 5-methyl-5,6,7,8-tetrahydromethanopterin + coenzyme M + 2 Na(+)(in) = 5,6,7,8-tetrahydromethanopterin + methyl-coenzyme M + 2 Na(+)(out). Its pathway is one-carbon metabolism; methanogenesis from CO(2); methyl-coenzyme M from 5,10-methylene-5,6,7,8-tetrahydromethanopterin: step 2/2. Part of a complex that catalyzes the formation of methyl-coenzyme M and tetrahydromethanopterin from coenzyme M and methyl-tetrahydromethanopterin. This is an energy-conserving, sodium-ion translocating step. The sequence is that of Tetrahydromethanopterin S-methyltransferase subunit B from Methanococcus maripaludis (strain C7 / ATCC BAA-1331).